The chain runs to 202 residues: Proteasome subunit beta 1 (202 aa).

Residue M1 is a propeptide, removed in mature form; by autocatalysis. Catalysis depends on T2, which acts as the Nucleophile.

This sequence belongs to the peptidase T1B family. As to quaternary structure, the 20S proteasome core is composed of 14 alpha and 14 beta subunits that assemble into four stacked heptameric rings, resulting in a barrel-shaped structure. The two inner rings, each composed of seven catalytic beta subunits, are sandwiched by two outer rings, each composed of seven alpha subunits. The catalytic chamber with the active sites is on the inside of the barrel. Has a gated structure, the ends of the cylinder being occluded by the N-termini of the alpha-subunits. Is capped at one or both ends by the proteasome regulatory ATPase, PAN.

It is found in the cytoplasm. The catalysed reaction is Cleavage of peptide bonds with very broad specificity.. The formation of the proteasomal ATPase PAN-20S proteasome complex, via the docking of the C-termini of PAN into the intersubunit pockets in the alpha-rings, triggers opening of the gate for substrate entry. Interconversion between the open-gate and close-gate conformations leads to a dynamic regulation of the 20S proteasome proteolysis activity. Functionally, component of the proteasome core, a large protease complex with broad specificity involved in protein degradation. This chain is Proteasome subunit beta 1, found in Pyrobaculum arsenaticum (strain DSM 13514 / JCM 11321 / PZ6).